The chain runs to 211 residues: Large ribosomal subunit protein uL3 (211 aa).

Position 150 is an N5-methylglutamine (Gln150).

Belongs to the universal ribosomal protein uL3 family. Part of the 50S ribosomal subunit. Forms a cluster with proteins L14 and L19. In terms of processing, methylated by PrmB.

Its function is as follows. One of the primary rRNA binding proteins, it binds directly near the 3'-end of the 23S rRNA, where it nucleates assembly of the 50S subunit. In Pseudomonas aeruginosa (strain LESB58), this protein is Large ribosomal subunit protein uL3.